The following is a 215-amino-acid chain: MEKLYSENEGMASNQGKMENEEQPQDERKPEVTCTLEDKKLENEGKTENKGKTGDEEMLKDKGKPESEGEAKEGKSEREGESEMEGGSEREGKPEIEGKPESEGEPGSETRAAGKRPAEDDVPRKAKRKTNKGLAHYLKEYKEAIHDMNFSNEDMIREFDNMAKVQDEKRKSKQKLGAFLWMQRNLQDPFYPRGPREFRGGCRAPRRDIEDIPYV.

At methionine 1 the chain carries N-acetylmethionine. The tract at residues 1–133 is disordered; the sequence is MEKLYSENEG…RKAKRKTNKG (133 aa). Phosphoserine occurs at positions 6, 88, and 102. The span at 25-102 shows a compositional bias: basic and acidic residues; the sequence is QDERKPEVTC…KPEIEGKPES (78 aa).

It belongs to the TFS-II family. TFA subfamily.

The protein resides in the nucleus. May be involved in transcriptional regulation. The protein is Transcription elongation factor A protein-like 4 (TCEAL4) of Homo sapiens (Human).